The following is a 297-amino-acid chain: MRIAAIINARAGTVLRMSPSAVTERLSVVWGSLGHDAAIILAEGKDMGRMVRKACRDPDIRAIIIGGGDGSLSRALEHVLASGKSLGVLPLGTMNYMARQIGMPLDLAQAAVALAGAVQTPMDVGRVNDRYFLIRACFGAFPEFIQSRDRVRRKGGSFLEGALAGLSGVARRYRIVEAELSSPGGRARIATSFLMISNNLCRDSDPFLLERERMDGGSLGVYVGRSAGPVGLMELGLQAAMGRWASNEALFQGEMHWLEVQTEQRKPLISIDGEVEKMEGPFRFDILPGALSILVPK.

Residues Glu-43–Tyr-131 enclose the DAGKc domain. Gly-68–Arg-74 contributes to the ATP binding site. The active-site Proton acceptor is the Glu-274.

Belongs to the diacylglycerol/lipid kinase family.

The protein localises to the cytoplasm. Functionally, might phosphorylate lipids. The chain is Putative lipid kinase MamU from Magnetospirillum gryphiswaldense (strain DSM 6361 / JCM 21280 / NBRC 15271 / MSR-1).